A 307-amino-acid chain; its full sequence is Putative transcription factor bHLH086 (307 aa).

Disordered regions lie at residues 1–49 (MSLI…DHQN) and 167–215 (HEST…QSLA). Composition is skewed to polar residues over residues 12–28 (NYIS…SPQN) and 183–197 (GENT…SGTN). The basic motif stretch occupies residues 207 to 220 (SPKDPQSLAAKNRR). Residues 207-256 (SPKDPQSLAAKNRRERISERLKVLQELVPNGTKVDLVTMLEKAIGYVKFL) form the bHLH domain. The interval 221 to 256 (ERISERLKVLQELVPNGTKVDLVTMLEKAIGYVKFL) is helix-loop-helix motif.

As to quaternary structure, homodimer. Forms heterodimers with RHD6. Interacts with TIFY10B/JAZ2, TIFY6A/JAZ4, TIFY5A/JAZ8, TIFY7/JAZ9 and TIFY9/JAZ10.

The protein resides in the nucleus. Its function is as follows. Transcription factor that is specifically required for the development of root hairs. Acts with RHD6 to positively regulate root hair development. Acts downstream of genes that regulate epidermal pattern formation, such as GL2. Acts with RHD6 as transcription factor that integrates a jasmonate (JA) signaling pathway that stimulates root hair growth. The polypeptide is Putative transcription factor bHLH086 (Arabidopsis thaliana (Mouse-ear cress)).